We begin with the raw amino-acid sequence, 181 residues long: Inorganic pyrophosphatase (181 aa).

Substrate contacts are provided by K16, R30, and Y42. Mg(2+)-binding residues include D52, D57, and D89. A substrate-binding site is contributed by Y126.

Belongs to the PPase family. In terms of assembly, homohexamer. The cofactor is Mg(2+).

The protein localises to the cytoplasm. The catalysed reaction is diphosphate + H2O = 2 phosphate + H(+). Catalyzes the hydrolysis of inorganic pyrophosphate (PPi) forming two phosphate ions. The protein is Inorganic pyrophosphatase of Ureaplasma parvum serovar 3 (strain ATCC 700970).